The chain runs to 1248 residues: Kinesin-like protein KIN-14I (1248 aa).

In terms of domain architecture, MyTH4 spans 88–244; sequence FQKDPIPTSL…PAREEIEALL (157 aa). The FERM domain maps to 249 to 563; that stretch reads LTTIVFFLDE…HINDVMLRRY (315 aa). Positions 586–659 form a coiled coil; the sequence is NIEIYEKRVQ…LDKLKSLCDE (74 aa). A disordered region spans residues 675–704; the sequence is ETRLKSGQGQESSNRTGVSGNHFERDTLPT. Over residues 679 to 693 the composition is skewed to polar residues; sequence KSGQGQESSNRTGVS. Residues 708 to 799 are a coiled coil; the sequence is VNNSIEMLAK…TRSLNVTEST (92 aa). The 322-residue stretch at 872–1193 folds into the Kinesin motor domain; it reads KIRVFCRLRP…LMYASRVRCI (322 aa). Residue 953–960 participates in ATP binding; it reads GQTGSGKT. Residues 1201 to 1223 form a calmodulin-binding region; that stretch reads VAPKEIMRLKKLIAYWKEQAGKR. The interval 1220–1248 is disordered; it reads AGKRSEDDDLEEIQEERTPKEKADNRLTS. Positions 1234–1248 are enriched in basic and acidic residues; it reads EERTPKEKADNRLTS.

It belongs to the TRAFAC class myosin-kinesin ATPase superfamily. Kinesin family. KIN-14 subfamily. Binds microtubules via its N-terminus containing the MyTH4 domain and binds F-actin via its FERM domain. Binding to calmodulin inhibits microtubule binding activity.

It localises to the cytoplasm. It is found in the cytoskeleton. Its function is as follows. Minus-end microtubule-dependent motor protein involved in the regulation of cell division. The sequence is that of Kinesin-like protein KIN-14I from Oryza sativa subsp. japonica (Rice).